Reading from the N-terminus, the 96-residue chain is Co-chaperonin GroES (96 aa).

Belongs to the GroES chaperonin family. As to quaternary structure, heptamer of 7 subunits arranged in a ring. Interacts with the chaperonin GroEL.

It localises to the cytoplasm. Together with the chaperonin GroEL, plays an essential role in assisting protein folding. The GroEL-GroES system forms a nano-cage that allows encapsulation of the non-native substrate proteins and provides a physical environment optimized to promote and accelerate protein folding. GroES binds to the apical surface of the GroEL ring, thereby capping the opening of the GroEL channel. In Tremblaya princeps, this protein is Co-chaperonin GroES.